Reading from the N-terminus, the 1556-residue chain is uncharacterized protein (1556 aa).

Ser-2 is modified (N-acetylserine). Basic and acidic residues predominate over residues 145–156 (NQLENRKSLERK). Positions 145 to 170 (NQLENRKSLERKPSRKRRKKNSNVND) are disordered. The region spanning 378 to 583 (SGDYPVCAKG…MIMSYLKLHP (206 aa)) is the Helicase ATP-binding domain. Position 391–398 (391–398 (EEMGLGKT)) interacts with ATP. Residue Ser-810 is modified to Phosphoserine. The interval 810–850 (SEDEDEHMDERFGEKETSSGDESDREINGAKNHDNHNNDGM) is disordered. Composition is skewed to basic and acidic residues over residues 817–827 (MDERFGEKETS) and 834–846 (REIN…DNHN). The segment at 1239-1277 (CSICLGEVEIGAIIKCGHYFCKSCILTWLRAHSKCPICK) adopts an RING-type zinc-finger fold. A compositionally biased stretch (basic and acidic residues) spans 1297–1309 (REKEIQEPRREGA). 2 disordered regions span residues 1297-1319 (REKE…SNEN) and 1508-1534 (EKSK…AKFE). Positions 1310–1319 (DSSQDNSNEN) are enriched in low complexity. In terms of domain architecture, Helicase C-terminal spans 1363 to 1531 (KLISYLRLKS…ETDNEESDDA (169 aa)). Positions 1508–1518 (EKSKKGDKYDE) are enriched in basic and acidic residues. Over residues 1519–1529 (AQDETDNEESD) the composition is skewed to acidic residues.

This sequence belongs to the SNF2/RAD54 helicase family.

It is found in the nucleus. Functionally, is probably involved in a pathway contributing to genomic integrity. This is an uncharacterized protein from Saccharomyces cerevisiae (strain ATCC 204508 / S288c) (Baker's yeast).